Here is a 340-residue protein sequence, read N- to C-terminus: 3-hydroxybenzoate synthase (340 aa).

Substrate is bound by residues Tyr147, Arg154, Tyr207, and Arg220. Catalysis depends on Glu334, which acts as the Proton acceptor.

This sequence belongs to the FkbO/Hyg5 family. In terms of assembly, trimer.

The catalysed reaction is chorismate = 3-hydroxybenzoate + pyruvate. Functionally, involved in the biosynthesis of BC325, a rapamycin analog containing a 3-hydroxybenzoate starter unit. Catalyzes the hydrolysis of chorismate via an intramolecular mechanism to yield 3-hydroxybenzoate (3HBA). The sequence is that of 3-hydroxybenzoate synthase from Streptomyces hygroscopicus.